The chain runs to 617 residues: Protein fem-1 homolog C (617 aa).

Methionine 1 is modified (N-acetylmethionine). 7 ANK repeats span residues 2–31 (DLKT…KAEV), 40–70 (NGAT…SIEV), 82–111 (EGAP…SVNN), 115–144 (TNST…DLEV), 148–177 (HGHT…DVNR), 181–210 (KGNT…KMEK), and 213–242 (YGMT…TSKT). 2 TPR repeats span residues 245 to 279 (INAL…RYSD) and 338 to 371 (SYYI…QQSN). ANK repeat units follow at residues 481-523 (NNFS…DVNV) and 527-556 (DDNS…HFDA).

This sequence belongs to the fem-1 family. As to quaternary structure, component of a Cul2-RING (CRL2) E3 ubiquitin-protein ligase complex, also named ECS (Elongin BC-CUL2/5-SOCS-box protein) complex, composed of CUL2, Elongin BC (ELOB and ELOC), RBX1 and substrate-specific adapter FEM1C. As to expression, widely expressed. Expressed at higher level in testis.

Its pathway is protein modification; protein ubiquitination. Substrate-recognition component of a Cul2-RING (CRL2) E3 ubiquitin-protein ligase complex of the DesCEND (destruction via C-end degrons) pathway, which recognizes a C-degron located at the extreme C terminus of target proteins, leading to their ubiquitination and degradation. The C-degron recognized by the DesCEND pathway is usually a motif of less than ten residues and can be present in full-length proteins, truncated proteins or proteolytically cleaved forms. The CRL2(FEM1C) complex specifically recognizes proteins with an arginine at the C-terminus: recognizes and binds proteins ending with -Lys/Arg-Xaa-Arg and -Lys/Arg-Xaa-Xaa-Arg C-degrons, such as SIL1 or OR51B2, leading to their ubiquitination and degradation. The CRL2(FEM1C) complex mediates ubiquitination and degradation of truncated MSRB1/SEPX1 selenoproteins produced by failed UGA/Sec decoding. Promotes ubiquitination and degradation of SLBP. This Mus musculus (Mouse) protein is Protein fem-1 homolog C.